A 310-amino-acid chain; its full sequence is Bifunctional protein FolD 3, chloroplastic (310 aa).

The transit peptide at 1 to 48 directs the protein to the chloroplast; that stretch reads MFTDCSSSTTSRLIHLYNRNGVFLPRPSVSQFSLRTTASTWRCTLSIR.

The protein belongs to the tetrahydrofolate dehydrogenase/cyclohydrolase family. Homodimer.

Its subcellular location is the plastid. It is found in the chloroplast. The enzyme catalyses (6R)-5,10-methylene-5,6,7,8-tetrahydrofolate + NADP(+) = (6R)-5,10-methenyltetrahydrofolate + NADPH. The catalysed reaction is (6R)-5,10-methenyltetrahydrofolate + H2O = (6R)-10-formyltetrahydrofolate + H(+). It functions in the pathway one-carbon metabolism; tetrahydrofolate interconversion. Functionally, catalyzes the oxidation of 5,10-methylenetetrahydrofolate to 5,10-methenyltetrahydrofolate and then the hydrolysis of 5,10-methenyltetrahydrofolate to 10-formyltetrahydrofolate. This Arabidopsis thaliana (Mouse-ear cress) protein is Bifunctional protein FolD 3, chloroplastic (FOLD3).